The primary structure comprises 37 residues: Photosystem II reaction center protein L (37 aa).

At 1–13 (MEPNPNRQPVELN) the chain is on the cytoplasmic side. Residues 14-35 (RTSLYLGLLLILVLALLFSSYF) traverse the membrane as a helical segment. The Lumenal segment spans residues 36-37 (FN).

As to quaternary structure, PSII is composed of 1 copy each of membrane proteins PsbA, PsbB, PsbC, PsbD, PsbE, PsbF, PsbH, PsbI, PsbJ, PsbK, PsbL, PsbM, PsbT, PsbX, PsbY, PsbZ, Psb30/Ycf12, peripheral proteins PsbO, CyanoQ (PsbQ), PsbU, PsbV and a large number of cofactors. It forms dimeric complexes. Part of a photosystem II (PSII) assembly intermediate complex PSII-I; crystallized from a strain deleted of psbJ, it forms monomeric PSII before addition of the oxygen evolving complex. PSII-I includes 3 assembly factors not found in mature PSII (Psb27, Psb28 and Psb34). It depends on PSII binds multiple chlorophylls, carotenoids and specific lipids. as a cofactor.

The protein resides in the cellular thylakoid membrane. One of the components of the core complex of photosystem II (PSII). PSII is a light-driven water:plastoquinone oxidoreductase that uses light energy to abstract electrons from H(2)O, generating O(2) and a proton gradient subsequently used for ATP formation. It consists of a core antenna complex that captures photons, and an electron transfer chain that converts photonic excitation into a charge separation. This subunit is found at the monomer-monomer interface and is required for correct PSII assembly and/or dimerization. This subunit may make specific contacts with lipid(s). This Thermosynechococcus vestitus (strain NIES-2133 / IAM M-273 / BP-1) protein is Photosystem II reaction center protein L.